A 138-amino-acid polypeptide reads, in one-letter code: MLIPKRVKYRRQHRPTRRGVSKGGNRVTFGDYGVQALEPAYITNRQIEAARIAINRHVKRGGKVWINIFPDRPLTQKPLGVRMGSGKGPVEKWIANVKPGRILFEMSYPSEEVALEALRRAGAKLPCKVRIVKKEDQF.

Belongs to the universal ribosomal protein uL16 family. Part of the 50S ribosomal subunit.

Its function is as follows. Binds 23S rRNA and is also seen to make contacts with the A and possibly P site tRNAs. This Corynebacterium kroppenstedtii (strain DSM 44385 / JCM 11950 / CIP 105744 / CCUG 35717) protein is Large ribosomal subunit protein uL16.